Here is a 182-residue protein sequence, read N- to C-terminus: NADH-quinone oxidoreductase subunit I (182 aa).

2 consecutive 4Fe-4S ferredoxin-type domains span residues 52–82 (LTRDPDGEERCVACNLCAVACPVGCISLQKA) and 92–121 (EFFRINFSRCIFCGLCEEACPTTAIQLTPD). [4Fe-4S] cluster-binding residues include cysteine 62, cysteine 65, cysteine 68, cysteine 72, cysteine 101, cysteine 104, cysteine 107, and cysteine 111.

This sequence belongs to the complex I 23 kDa subunit family. NDH-1 is composed of 13 different subunits. Subunits NuoA, H, J, K, L, M, N constitute the membrane sector of the complex. It depends on [4Fe-4S] cluster as a cofactor.

The protein localises to the cell inner membrane. The enzyme catalyses a quinone + NADH + 5 H(+)(in) = a quinol + NAD(+) + 4 H(+)(out). Its function is as follows. NDH-1 shuttles electrons from NADH, via FMN and iron-sulfur (Fe-S) centers, to quinones in the respiratory chain. The immediate electron acceptor for the enzyme in this species is believed to be ubiquinone. Couples the redox reaction to proton translocation (for every two electrons transferred, four hydrogen ions are translocated across the cytoplasmic membrane), and thus conserves the redox energy in a proton gradient. The protein is NADH-quinone oxidoreductase subunit I of Pseudomonas aeruginosa (strain LESB58).